The chain runs to 537 residues: Biotin carboxylase, chloroplastic (537 aa).

The transit peptide at 1-71 (MDASMITNSK…ATSGGLGVTC (71 aa)) directs the protein to the chloroplast. ATP-binding positions include Lys-188, Lys-230, 236 to 237 (GG), 272 to 275 (EKFV), and His-280. The 198-residue stretch at 192–389 (RETMKNAGVP…LIEEQIRVAM (198 aa)) folds into the ATP-grasp domain. A hydrogencarbonate-binding site is contributed by Lys-309. ATP is bound by residues Glu-347 and Glu-360. Positions 347, 360, and 362 each coordinate Mg(2+). 3 residues coordinate Mn(2+): Glu-347, Glu-360, and Asn-362. Arg-364, Val-367, and Arg-410 together coordinate hydrogencarbonate. Residue Arg-364 is part of the active site. Arg-410 is a biotin binding site.

In terms of assembly, acetyl-CoA carboxylase is a heterohexamer composed of biotin carboxyl carrier protein, biotin carboxylase and two subunits each of ACCase subunit alpha and ACCase plastid-coded subunit beta (accD). Requires Mg(2+) as cofactor. It depends on Mn(2+) as a cofactor. In terms of tissue distribution, accumulates in fatty acids synthesizing tissues. Mostly expressed in siliques, developing leaves, and flowers, present in roots and embryos (especially at torpedo stage), and, to a lower extent, in mature leaves.

It localises to the plastid. It is found in the chloroplast. It carries out the reaction N(6)-biotinyl-L-lysyl-[protein] + hydrogencarbonate + ATP = N(6)-carboxybiotinyl-L-lysyl-[protein] + ADP + phosphate + H(+). It participates in lipid metabolism; malonyl-CoA biosynthesis; malonyl-CoA from acetyl-CoA: step 1/1. This protein is a component of the acetyl coenzyme A carboxylase complex; first, biotin carboxylase catalyzes the carboxylation of the carrier protein and then the transcarboxylase transfers the carboxyl group to form malonyl-CoA. The protein is Biotin carboxylase, chloroplastic (CAC2) of Arabidopsis thaliana (Mouse-ear cress).